A 46-amino-acid polypeptide reads, in one-letter code: Photosystem II reaction center protein K (46 aa).

Residues 1 to 9 (MESILMIFA) constitute a propeptide that is removed on maturation. A helical transmembrane segment spans residues 25-45 (LPVIPVLFLLLAFVWQAAVSF).

Belongs to the PsbK family. PSII is composed of 1 copy each of membrane proteins PsbA, PsbB, PsbC, PsbD, PsbE, PsbF, PsbH, PsbI, PsbJ, PsbK, PsbL, PsbM, PsbT, PsbX, PsbY, PsbZ, Psb30/Ycf12, at least 3 peripheral proteins of the oxygen-evolving complex and a large number of cofactors. It forms dimeric complexes.

The protein localises to the plastid. Its subcellular location is the chloroplast thylakoid membrane. One of the components of the core complex of photosystem II (PSII). PSII is a light-driven water:plastoquinone oxidoreductase that uses light energy to abstract electrons from H(2)O, generating O(2) and a proton gradient subsequently used for ATP formation. It consists of a core antenna complex that captures photons, and an electron transfer chain that converts photonic excitation into a charge separation. This Stigeoclonium helveticum (Green alga) protein is Photosystem II reaction center protein K.